We begin with the raw amino-acid sequence, 2360 residues long: DNA (cytosine-5-)-methyltransferase DMT5 (2360 aa).

The SAM-dependent MTase C5-type domain occupies Phe48–Val507. The active site involves Cys146. A Helicase ATP-binding domain is found at Ala1258 to His1575. Position 1271–1278 (His1271–Thr1278) interacts with ATP. The tract at residues Ser1451 to Asp1498 is disordered. Residues Gln1465–Arg1476 show a composition bias toward basic residues. The RING-type; degenerate zinc finger occupies Cys2018–Ser2070. A Helicase C-terminal domain is found at Lys2102 to Lys2267.

In the N-terminal section; belongs to the class I-like SAM-binding methyltransferase superfamily. C5-methyltransferase family. It in the C-terminal section; belongs to the SNF2/RAD54 helicase family.

The protein resides in the nucleus. The protein localises to the chromosome. The catalysed reaction is a 2'-deoxycytidine in DNA + S-adenosyl-L-methionine + ATP + H2O = a 5-methyl-2'-deoxycytidine in DNA + S-adenosyl-L-homocysteine + ADP + phosphate + 2 H(+). Functionally, may play a role in cytosine methylation at palindromic 5'-CG-3' and 5'-C[ACT]G-3' sites in DNA. In Verticillium dahliae (strain VdLs.17 / ATCC MYA-4575 / FGSC 10137) (Verticillium wilt), this protein is DNA (cytosine-5-)-methyltransferase DMT5.